A 492-amino-acid chain; its full sequence is MTAPANVRVRFCPSPTGTPHVGMVRTALFNWAYARHTGGTFVFRIEDTDAARDSEESYLALLDALRWLGLDWDEGPEVGGPYGPYRQSQRGEIYRDVVAKLVEAGEAYYAFSTPEEVEARHIAAGRNPKLGYDNFDRHLTDSQRAAFLAEGRQPVVRLRMPDEDLGWDDLVRGSTVFAAGSVPDFALTRANGDPLYTLVNPCDDALMKITHVLRGEDLLPSTPRQLALYQALIRIGVAERIPQFAHLPTVLGEGTKKLSKRDPQSNLFAHRDRGFIPEGLLNYLALLGWAIADDRDVFSLDEMVAAFDVVDVNSNPARFDQKKADALNAEHIRMLTAADFAARLRHYLDVHGHRLALDDAAFATAAELVQTRIVVLGDAWDLLKFLNDDEYAIDPKAAAKELGPDGAAVLDAALPALDAVTDWAAPQIEAALKTALIDGLGLKPRKAFGPIRVGATGTTISPPLFESLQLLGRDRSLRRLRAARERAGQHSA.

A 'HIGH' region motif is present at residues 13–23 (PSPTGTPHVGM). The short motif at 257 to 261 (KLSKR) is the 'KMSKS' region element. K260 is a binding site for ATP.

It belongs to the class-I aminoacyl-tRNA synthetase family. Glutamate--tRNA ligase type 1 subfamily. Monomer.

It is found in the cytoplasm. It carries out the reaction tRNA(Glu) + L-glutamate + ATP = L-glutamyl-tRNA(Glu) + AMP + diphosphate. Catalyzes the attachment of glutamate to tRNA(Glu) in a two-step reaction: glutamate is first activated by ATP to form Glu-AMP and then transferred to the acceptor end of tRNA(Glu). This chain is Glutamate--tRNA ligase, found in Mycolicibacterium paratuberculosis (strain ATCC BAA-968 / K-10) (Mycobacterium paratuberculosis).